Here is a 716-residue protein sequence, read N- to C-terminus: Radial spoke head protein 4 homolog A (716 aa).

Disordered regions lie at residues 1-164 (MEDS…CGRR), 375-410 (EGEDEEEVEEEDVAEERDNGESEAHEDEEDELPKSF), 506-526 (GEEEGEEEEEAEGGRNSFEEN), and 697-716 (LLAAENEESEEDEDEEDDYD). Positions 8–25 (KQEKENQEELGETRRPWE) are enriched in basic and acidic residues. 3 stretches are compositionally biased toward low complexity: residues 29–42 (AASPQYSEPESSEP), 54–66 (QSRSSRPWSPQSR), and 80–100 (SSPAPVSPREPSSSPSPLAPA). The span at 140–156 (HHTSQSEGNTFQQSQQP) shows a compositional bias: polar residues. Residues 375–389 (EGEDEEEVEEEDVAE) show a composition bias toward acidic residues. Residue Ser396 is modified to Phosphoserine. Acidic residues-rich tracts occupy residues 506–516 (GEEEGEEEEEA) and 701–716 (ENEESEEDEDEEDDYD).

Belongs to the flagellar radial spoke RSP4/6 family. Interacts with RSPH6A. As to expression, expressed in trachea, lungs, and testes. Very strong expression is detected in nasal brushings.

It localises to the cytoplasm. The protein resides in the cytoskeleton. It is found in the cilium axoneme. Its subcellular location is the cell projection. The protein localises to the cilium. Its function is as follows. Component of the axonemal radial spoke head which plays an important role in ciliary motility. Essential for triplet radial spokes (RS1, RS2 and RS3) head assembly in the motile cilia. The chain is Radial spoke head protein 4 homolog A (RSPH4A) from Homo sapiens (Human).